An 88-amino-acid chain; its full sequence is Phosphocarrier protein HPr (88 aa).

Residues 1 to 88 (MEQASFVVID…EVLKKEGLAE (88 aa)) enclose the HPr domain. Histidine 15 serves as the catalytic Pros-phosphohistidine intermediate. Phosphoserine; by HPrK/P is present on serine 46.

Belongs to the HPr family.

It is found in the cytoplasm. With respect to regulation, phosphorylation on Ser-46 inhibits the phosphoryl transfer from enzyme I to HPr. Its function is as follows. General (non sugar-specific) component of the phosphoenolpyruvate-dependent sugar phosphotransferase system (sugar PTS). This major carbohydrate active-transport system catalyzes the phosphorylation of incoming sugar substrates concomitantly with their translocation across the cell membrane. The phosphoryl group from phosphoenolpyruvate (PEP) is transferred to the phosphoryl carrier protein HPr by enzyme I. Phospho-HPr then transfers it to the PTS EIIA domain. Functionally, P-Ser-HPr interacts with the catabolite control protein A (CcpA), forming a complex that binds to DNA at the catabolite response elements cre, operator sites preceding a large number of catabolite-regulated genes. Thus, P-Ser-HPr is a corepressor in carbon catabolite repression (CCR), a mechanism that allows bacteria to coordinate and optimize the utilization of available carbon sources. P-Ser-HPr also plays a role in inducer exclusion, in which it probably interacts with several non-PTS permeases and inhibits their transport activity. This chain is Phosphocarrier protein HPr (ptsH), found in Listeria monocytogenes serovar 1/2a (strain ATCC BAA-679 / EGD-e).